The primary structure comprises 150 residues: Cdc42 effector protein 5 (150 aa).

Disordered stretches follow at residues 1 to 20 (MPVM…DRGA), 34 to 89 (LHVG…PADP), and 114 to 133 (SETT…QHPK). A CRIB domain is found at 23 to 37 (ISAPLGDFRHTLHVG). The residue at position 38 (Arg38) is an Omega-N-methylarginine. Pro residues-rich tracts occupy residues 55–66 (GPPPEPGAPPVV) and 74–87 (PAAP…PSPA). Positions 114–127 (SETTATKPDGDAHP) are enriched in basic and acidic residues.

The protein belongs to the BORG/CEP family. As to quaternary structure, interacts with CDC42 in a GTP-dependent manner, and with SEPT7. As to expression, highly expressed in the skeletal muscle.

It is found in the endomembrane system. The protein resides in the cytoplasm. Its subcellular location is the cytoskeleton. Functionally, probably involved in the organization of the actin cytoskeleton. May act downstream of CDC42 to induce actin filament assembly leading to cell shape changes. Induces pseudopodia formation in fibroblasts. Inhibits MAPK8 independently of CDC42 binding. Controls septin organization and this effect is negatively regulated by CDC42. The chain is Cdc42 effector protein 5 (Cdc42ep5) from Mus musculus (Mouse).